We begin with the raw amino-acid sequence, 548 residues long: Membrane protein insertase YidC (548 aa).

A run of 5 helical transmembrane segments spans residues 6 to 26 (NLILIGLLFVSFLLWQQWESD), 357 to 377 (NWGVAIIMLTLLVRGIMFPLT), 424 to 444 (LGGCLPILVQMPIFIALYWAL), 455 to 475 (FALWITDLSVKDPFFVLPILM), and 503 to 523 (PIIFTFMFLWFPAGLTLYWLV).

This sequence belongs to the OXA1/ALB3/YidC family. Type 1 subfamily. In terms of assembly, interacts with the Sec translocase complex via SecD. Specifically interacts with transmembrane segments of nascent integral membrane proteins during membrane integration.

It localises to the cell inner membrane. In terms of biological role, required for the insertion and/or proper folding and/or complex formation of integral membrane proteins into the membrane. Involved in integration of membrane proteins that insert both dependently and independently of the Sec translocase complex, as well as at least some lipoproteins. Aids folding of multispanning membrane proteins. The chain is Membrane protein insertase YidC from Aeromonas hydrophila subsp. hydrophila (strain ATCC 7966 / DSM 30187 / BCRC 13018 / CCUG 14551 / JCM 1027 / KCTC 2358 / NCIMB 9240 / NCTC 8049).